Reading from the N-terminus, the 247-residue chain is Thioredoxin reductase-like selenoprotein T homolog selt-1.1 (247 aa).

A signal peptide spans 1 to 26 (MSRFGVFIIGVLFFMSVCDVLRTVSA). Cys92 and Cys95 are oxidised to a cystine.

The protein belongs to the SelWTH family. SELT subfamily. Broadly expressed in neurons of nervous system including ADL, ASH, ASI, ASJ, ASK and AWB amphid sensilla neurons, in epithelial cells including hypodermal, arcade, pharyngeal, vulval and rectal cells, and in somatic muscle cells of the head, neck and body wall, and non-striated pharyngeal muscles.

The protein localises to the endoplasmic reticulum. It carries out the reaction [thioredoxin]-dithiol + NADP(+) = [thioredoxin]-disulfide + NADPH + H(+). Its function is as follows. Probably has thioredoxin reductase-like oxidoreductase activity. Plays a role in regulating the oxidative stress response, and odorant and pathogenic bacteria avoidance behavior. The sequence is that of Thioredoxin reductase-like selenoprotein T homolog selt-1.1 from Caenorhabditis elegans.